A 101-amino-acid chain; its full sequence is uncharacterized protein (101 aa).

A signal peptide spans 1 to 21 (MKLSTCCAALLLALASPAVLA). The span at 79–94 (RTTSGNVSAPAQSSQD) shows a compositional bias: polar residues. The interval 79–101 (RTTSGNVSAPAQSSQDGAPAEPQ) is disordered.

This is an uncharacterized protein from Escherichia coli (strain K12).